Reading from the N-terminus, the 141-residue chain is Organic hydroperoxide resistance protein OhrA (141 aa).

It belongs to the OsmC/Ohr family.

Functionally, involved in organic hydroperoxide resistance. The chain is Organic hydroperoxide resistance protein OhrA (ohrA) from Bacillus subtilis (strain 168).